The chain runs to 316 residues: 4-hydroxy-3-methylbut-2-enyl diphosphate reductase (316 aa).

C12 contacts [4Fe-4S] cluster. (2E)-4-hydroxy-3-methylbut-2-enyl diphosphate is bound by residues H41 and H74. H41 and H74 together coordinate dimethylallyl diphosphate. Residues H41 and H74 each coordinate isopentenyl diphosphate. Residue C96 participates in [4Fe-4S] cluster binding. H124 contributes to the (2E)-4-hydroxy-3-methylbut-2-enyl diphosphate binding site. H124 is a dimethylallyl diphosphate binding site. H124 is a binding site for isopentenyl diphosphate. Catalysis depends on E126, which acts as the Proton donor. (2E)-4-hydroxy-3-methylbut-2-enyl diphosphate is bound at residue T169. C199 contacts [4Fe-4S] cluster. Positions 227, 228, 229, and 271 each coordinate (2E)-4-hydroxy-3-methylbut-2-enyl diphosphate. Dimethylallyl diphosphate is bound by residues S227, S228, N229, and S271. Residues S227, S228, N229, and S271 each coordinate isopentenyl diphosphate.

The protein belongs to the IspH family. [4Fe-4S] cluster is required as a cofactor.

The catalysed reaction is isopentenyl diphosphate + 2 oxidized [2Fe-2S]-[ferredoxin] + H2O = (2E)-4-hydroxy-3-methylbut-2-enyl diphosphate + 2 reduced [2Fe-2S]-[ferredoxin] + 2 H(+). It carries out the reaction dimethylallyl diphosphate + 2 oxidized [2Fe-2S]-[ferredoxin] + H2O = (2E)-4-hydroxy-3-methylbut-2-enyl diphosphate + 2 reduced [2Fe-2S]-[ferredoxin] + 2 H(+). It participates in isoprenoid biosynthesis; dimethylallyl diphosphate biosynthesis; dimethylallyl diphosphate from (2E)-4-hydroxy-3-methylbutenyl diphosphate: step 1/1. Its pathway is isoprenoid biosynthesis; isopentenyl diphosphate biosynthesis via DXP pathway; isopentenyl diphosphate from 1-deoxy-D-xylulose 5-phosphate: step 6/6. In terms of biological role, catalyzes the conversion of 1-hydroxy-2-methyl-2-(E)-butenyl 4-diphosphate (HMBPP) into a mixture of isopentenyl diphosphate (IPP) and dimethylallyl diphosphate (DMAPP). Acts in the terminal step of the DOXP/MEP pathway for isoprenoid precursor biosynthesis. The protein is 4-hydroxy-3-methylbut-2-enyl diphosphate reductase of Vibrio vulnificus (strain CMCP6).